Consider the following 176-residue polypeptide: Nucleoside triphosphate/diphosphate phosphatase (176 aa).

Residue Arg-23 is the Proton donor of the active site. Positions 87, 103, 105, 107, 120, and 123 each coordinate Mg(2+).

It belongs to the Ntdp family. The cofactor is Mg(2+).

It catalyses the reaction a ribonucleoside 5'-triphosphate + H2O = a ribonucleoside 5'-diphosphate + phosphate + H(+). The enzyme catalyses a ribonucleoside 5'-diphosphate + H2O = a ribonucleoside 5'-phosphate + phosphate + H(+). Has nucleoside phosphatase activity towards nucleoside triphosphates and nucleoside diphosphates. The polypeptide is Nucleoside triphosphate/diphosphate phosphatase (yjjG) (Lactococcus lactis subsp. lactis (strain IL1403) (Streptococcus lactis)).